Reading from the N-terminus, the 259-residue chain is Hydroxyacylglutathione hydrolase (259 aa).

Zn(2+) is bound by residues His-56, His-58, Asp-60, His-61, His-112, Asp-133, and His-171. The interval 220 to 243 is disordered; it reads NPFLRTGETSVKEKADERSDAQNT. Basic and acidic residues predominate over residues 229-239; it reads SVKEKADERSD.

It belongs to the metallo-beta-lactamase superfamily. Glyoxalase II family. As to quaternary structure, monomer. It depends on Zn(2+) as a cofactor.

The catalysed reaction is an S-(2-hydroxyacyl)glutathione + H2O = a 2-hydroxy carboxylate + glutathione + H(+). Its pathway is secondary metabolite metabolism; methylglyoxal degradation; (R)-lactate from methylglyoxal: step 2/2. Thiolesterase that catalyzes the hydrolysis of S-D-lactoyl-glutathione to form glutathione and D-lactic acid. This is Hydroxyacylglutathione hydrolase from Pseudomonas syringae pv. syringae (strain B728a).